We begin with the raw amino-acid sequence, 184 residues long: Photosystem I assembly protein Ycf4 (184 aa).

The next 2 membrane-spanning stretches (helical) occupy residues 21-43 and 58-80; these read NFFW…SSSY and VFIP…GFYL.

Belongs to the Ycf4 family.

The protein resides in the plastid. It localises to the chloroplast thylakoid membrane. Functionally, seems to be required for the assembly of the photosystem I complex. This Psilotum nudum (Whisk fern) protein is Photosystem I assembly protein Ycf4.